Here is a 223-residue protein sequence, read N- to C-terminus: Riboflavin kinase (223 aa).

The segment at 1–89 (MHRINALKHL…KHIFCGDEDK (89 aa)) is unknown. A riboflavin kinase region spans residues 90–223 (VELYGNVITG…IMIEDRSACE (134 aa)). 99-104 (GLGEGQ) is a CDP binding site. Thr-128 and Asn-130 together coordinate Mg(2+). Positions 185 and 193 each coordinate FMN. Position 198–201 (198–201 (VHLR)) interacts with CDP.

This sequence belongs to the archaeal riboflavin kinase family. Mg(2+) is required as a cofactor.

The enzyme catalyses riboflavin + CTP = CDP + FMN + H(+). The protein operates within cofactor biosynthesis; FMN biosynthesis; FMN from riboflavin (CTP route): step 1/1. Its function is as follows. Catalyzes the CTP-dependent phosphorylation of riboflavin (vitamin B2) to form flavin mononucleotide (FMN). This is Riboflavin kinase (ribK) from Methanococcoides burtonii (strain DSM 6242 / NBRC 107633 / OCM 468 / ACE-M).